A 613-amino-acid polypeptide reads, in one-letter code: Phostensin (613 aa).

Over residues Glu-18–Leu-33 the composition is skewed to basic and acidic residues. Disordered stretches follow at residues Glu-18–Gln-231 and Gly-266–Gly-500. Phosphoserine occurs at positions 54, 125, 133, 175, and 195. Composition is skewed to basic and acidic residues over residues Arg-104–Leu-154 and Leu-167–Lys-191. Phosphothreonine is present on Thr-199. Residues Thr-199–Ser-221 are compositionally biased toward basic and acidic residues. Position 224 is a phosphoserine (Ser-224). The segment covering Gly-266–Trp-282 has biased composition (basic and acidic residues). The segment covering Leu-295–Ala-309 has biased composition (polar residues). 3 stretches are compositionally biased toward basic and acidic residues: residues Ala-314–Lys-327, Lys-340–Glu-350, and Glu-357–Leu-366. A phosphoserine mark is found at Ser-368 and Ser-432. Pro residues predominate over residues Gln-424–Asp-446. At Lys-457 the chain carries N6-acetyllysine. Low complexity predominate over residues Pro-476 to Pro-499. Phosphoserine occurs at positions 490 and 530. Residues Gln-552–Glu-595 are disordered. Residues Pro-567 to Ala-578 show a composition bias toward pro residues. Positions Pro-580–Leu-589 are enriched in acidic residues.

Interacts with Protein phosphatase 1 (PP1). In terms of tissue distribution, isoform 4 is predominantly expressed in leukocytes and spleen.

Its subcellular location is the cytoplasm. It localises to the cytoskeleton. Its function is as follows. May target protein phosphatase 1 to F-actin cytoskeleton. The polypeptide is Phostensin (PPP1R18) (Homo sapiens (Human)).